The primary structure comprises 7311 residues: MAM and LDL-receptor class A domain-containing protein 2 (7311 aa).

MAM domains lie at Ala4 to Thr171, Leu199 to Pro361, Lys363 to Pro530, Gly532 to Val695, Tyr727 to Val887, Met889 to Leu1050, Gly1052 to Leu1220, Phe1228 to Ser1392, Gly1394 to Ala1557, Gly1559 to Gln1722, Asn1755 to Ser1918, Thr1920 to Leu2087, Gly2089 to Val2254, Asn2274 to Pro2437, Thr2439 to Pro2601, and Gly2603 to Gly2771. The disordered stretch occupies residues Trp2461 to Thr2481. A compositionally biased stretch (low complexity) spans Gly2466–Pro2475. P-type domains follow at residues Gly2771–Pro2817 and Ser2818–Pro2862. Cystine bridges form between Cys2773/Cys2802, Cys2784/Cys2801, Cys2795/Cys2813, Cys2820/Cys2847, Cys2831/Cys2846, and Cys2841/Cys2858. 4 consecutive MAM domains span residues Trp2883–Pro3048, Arg3050–Pro3214, Gly3216–Ser3384, and Gly3429–Leu3587. The 36-residue stretch at Ser3593–Tyr3628 folds into the LDL-receptor class A 1 domain. 3 disulfides stabilise this stretch: Cys3594–Cys3605, Cys3600–Cys3618, and Cys3612–Cys3627. The 163-residue stretch at Tyr3632–Ser3794 folds into the MAM 21 domain. 2 LDL-receptor class A domains span residues Pro3814–Gly3850 and Ser4016–Ala4054. 3 disulfides stabilise this stretch: Cys3815–Cys3827, Cys3822–Cys3840, and Cys3834–Cys3849. Residues Gly3850 to Leu4011 form the MAM 22 domain. Intrachain disulfides connect Cys4017-Cys4029, Cys4024-Cys4042, and Cys4036-Cys4053. An MAM 23 domain is found at Glu4058–Pro4221. In terms of domain architecture, LDL-receptor class A 4 spans Gly4239–Pro4276. Disulfide bonds link Cys4240–Cys4253, Cys4247–Cys4266, and Cys4260–Cys4275. The region spanning Ala4277 to Glu4438 is the MAM 24 domain. In terms of domain architecture, LDL-receptor class A 5 spans Thr4444–Ala4483. Disulfide bonds link Cys4445/Cys4458, Cys4453/Cys4471, and Cys4465/Cys4482. The MAM 25 domain maps to Asn4486–Val4646. 2 consecutive LDL-receptor class A domains span residues Pro4660–Gly4699 and Tyr4859–Ser4899. 5 cysteine pairs are disulfide-bonded: Cys4668–Cys4687, Cys4681–Cys4698, Cys4860–Cys4876, Cys4871–Cys4889, and Cys4883–Cys4898. The MAM 26 domain occupies Trp4700–Gly4862. One can recognise an MAM 27 domain in the interval Ser4903 to Gln5063. In terms of domain architecture, LDL-receptor class A 8 spans Asn5085 to Pro5122. Intrachain disulfides connect Cys5086/Cys5099, Cys5093/Cys5112, and Cys5106/Cys5121. Residues His5123 to Leu5281 form the MAM 28 domain. One can recognise an LDL-receptor class A 9 domain in the interval Ser5287–Gly5322. Cystine bridges form between Cys5288/Cys5299, Cys5294/Cys5312, and Cys5306/Cys5321. In terms of domain architecture, MAM 29 spans Thr5326–Gln5489. The LDL-receptor class A 10 domain occupies Gln5513 to Ala5552. 3 cysteine pairs are disulfide-bonded: Cys5514-Cys5529, Cys5521-Cys5542, and Cys5536-Cys5551. The MAM 30 domain occupies Thr5554–Pro5719. An LDL-receptor class A 11 domain is found at Lys5725–Ser5763. 3 disulfide bridges follow: Cys5726/Cys5738, Cys5733/Cys5751, and Cys5745/Cys5762. In terms of domain architecture, MAM 31 spans Gly5768 to Asp5935. Positions Pro5957–Gly5993 constitute an LDL-receptor class A 12 domain. Intrachain disulfides connect Cys5958-Cys5970, Cys5965-Cys5983, and Cys5977-Cys5992. Positions Ser5994–Val6156 constitute an MAM 32 domain. The disordered stretch occupies residues Asn6014–Asp6034. A compositionally biased stretch (polar residues) spans Lys6023 to Asp6034. Residues Thr6161–Ser6200 enclose the LDL-receptor class A 13 domain. 3 disulfides stabilise this stretch: Cys6162–Cys6175, Cys6169–Cys6188, and Cys6182–Cys6199. The region spanning Ala6204–Lys6365 is the MAM 33 domain. An LDL-receptor class A 14 domain is found at Arg6377–Pro6414. Disulfide bonds link Cys6378-Cys6391, Cys6385-Cys6404, and Cys6398-Cys6413. MAM domains lie at Ala6430 to Lys6590, Leu6606 to Phe6779, Gly6808 to Phe6965, and Gly7173 to Leu7311.

In terms of tissue distribution, component of the acid-insoluble and acid-soluble organic matrix of the aragonitic skeleton (at protein level).

The protein resides in the secreted. In Acropora millepora (Staghorn coral), this protein is MAM and LDL-receptor class A domain-containing protein 2.